Reading from the N-terminus, the 68-residue chain is Figainin 1 (68 aa).

The signal sequence occupies residues 1–22 (MAFLKKSLFLVLFLGLVSLSIG). Positions 23–45 (EEEKREEEEKNEEGANQEENAEN) are disordered. Positions 23–47 (EEEKREEEEKNEEGANQEENAENKE) are excised as a propeptide. A compositionally biased stretch (acidic residues) spans 26-42 (KREEEEKNEEGANQEEN). Lys-67 is subject to Lysine amide.

As to expression, expressed by the skin glands.

The protein localises to the secreted. In terms of biological role, antimicrobial peptide that displays antibacterial and antiprotozoal activity. Exhibits antibacterial activity against the Gram-positive bacteria S.epidermidis ATCC 12228 (MIC=2 uM), E.casseliflavus ATCC 700327 (MIC=16 uM), S.aureus ATCC 25923 (MIC=4 uM) and E.faecalis ATCC 29212 (MIC=8 uM), and the Gram-negative bacteria E.coli ATCC 25922 (MIC=16 uM) and K.pneumoniae ATCC 13883 (MIC=4 uM). Displays antiprotozoal activity against the epimastigote form of T.cruzi (IC(50)=15.9 uM). Does not show antimicrobial activity against the Gram-negative bacterium P.aeruginosa ATCC 27853, or the fungi C.albicans ATCC 90028 and C.parapsilosis ATCC 22019. Shows high cytolytic activity against human erythrocytes (HC(50)=10 uM), and displays anti-proliferative effects against various cancer cell lines including MCF-7 breast cancer cells (IC(50)=13.7 uM), HeLa cervical adenocarcinoma cells (IC(50)=11.1 uM) and B16F10 murine melanoma cells (IC(50)=10.5 uM). This is Figainin 1 from Boana raniceps (Chaco tree frog).